We begin with the raw amino-acid sequence, 241 residues long: uncharacterized protein (241 aa).

The Cupin type-2 domain occupies 22–78; the sequence is SHKHAYSQFLFPLEGSIDLETEGRQVKLNPDHFLYIPPQCEHRFRSIGRNECLVLDV. In terms of domain architecture, HTH araC/xylS-type spans 137–235; it reads YASIAYIHSH…GMPPRLYRNT (99 aa). 2 DNA-binding regions (H-T-H motif) span residues 154 to 175 and 202 to 225; these read KKLA…KKQT and LTVV…TKST.

This is an uncharacterized protein from Bacillus subtilis (strain 168).